The chain runs to 124 residues: Fluoride-specific ion channel FluC (124 aa).

4 helical membrane passes run 4-24, 35-55, 60-80, and 102-122; these read LLLV…ISIF, FGTL…YALG, ISPE…TTFS, and VVLN…LVFS. The Na(+) site is built by Gly74 and Thr77.

It belongs to the fluoride channel Fluc/FEX (TC 1.A.43) family.

The protein localises to the cell inner membrane. The catalysed reaction is fluoride(in) = fluoride(out). Na(+) is not transported, but it plays an essential structural role and its presence is essential for fluoride channel function. In terms of biological role, fluoride-specific ion channel. Important for reducing fluoride concentration in the cell, thus reducing its toxicity. This chain is Fluoride-specific ion channel FluC, found in Shewanella sp. (strain ANA-3).